The primary structure comprises 239 residues: Phosphoribosylaminoimidazole-succinocarboxamide synthase (239 aa).

Belongs to the SAICAR synthetase family.

The enzyme catalyses 5-amino-1-(5-phospho-D-ribosyl)imidazole-4-carboxylate + L-aspartate + ATP = (2S)-2-[5-amino-1-(5-phospho-beta-D-ribosyl)imidazole-4-carboxamido]succinate + ADP + phosphate + 2 H(+). Its pathway is purine metabolism; IMP biosynthesis via de novo pathway; 5-amino-1-(5-phospho-D-ribosyl)imidazole-4-carboxamide from 5-amino-1-(5-phospho-D-ribosyl)imidazole-4-carboxylate: step 1/2. In Nitratiruptor sp. (strain SB155-2), this protein is Phosphoribosylaminoimidazole-succinocarboxamide synthase.